The following is a 375-amino-acid chain: Serpin B5 (375 aa).

4 N-linked (GlcNAc...) asparagine glycosylation sites follow: Asn99, Asn133, Asn188, and Asn361.

Belongs to the serpin family. Ov-serpin subfamily. Interacts with IRF6. As to expression, normal mammary epithelial cells.

It is found in the secreted. The protein localises to the extracellular space. Functionally, tumor suppressor. It blocks the growth, invasion, and metastatic properties of mammary tumors. As it does not undergo the S (stressed) to R (relaxed) conformational transition characteristic of active serpins, it exhibits no serine protease inhibitory activity. This is Serpin B5 (SERPINB5) from Homo sapiens (Human).